Consider the following 622-residue polypeptide: DNA mismatch repair protein MutL (622 aa).

The protein belongs to the DNA mismatch repair MutL/HexB family.

This protein is involved in the repair of mismatches in DNA. It is required for dam-dependent methyl-directed DNA mismatch repair. May act as a 'molecular matchmaker', a protein that promotes the formation of a stable complex between two or more DNA-binding proteins in an ATP-dependent manner without itself being part of a final effector complex. This chain is DNA mismatch repair protein MutL, found in Phenylobacterium zucineum (strain HLK1).